A 300-amino-acid chain; its full sequence is Sulfate adenylyltransferase subunit 2 (300 aa).

The disordered stretch occupies residues 281–300; sequence RAIDRDEAGSMEKKKREGYF.

This sequence belongs to the PAPS reductase family. CysD subfamily. Heterodimer composed of CysD, the smaller subunit, and CysN.

It catalyses the reaction sulfate + ATP + H(+) = adenosine 5'-phosphosulfate + diphosphate. Its pathway is sulfur metabolism; hydrogen sulfide biosynthesis; sulfite from sulfate: step 1/3. Functionally, with CysN forms the ATP sulfurylase (ATPS) that catalyzes the adenylation of sulfate producing adenosine 5'-phosphosulfate (APS) and diphosphate, the first enzymatic step in sulfur assimilation pathway. APS synthesis involves the formation of a high-energy phosphoric-sulfuric acid anhydride bond driven by GTP hydrolysis by CysN coupled to ATP hydrolysis by CysD. This chain is Sulfate adenylyltransferase subunit 2, found in Brucella melitensis biotype 2 (strain ATCC 23457).